We begin with the raw amino-acid sequence, 250 residues long: Lectin 1 (250 aa).

Residue N119 is glycosylated (N-linked (GlcNAc...) asparagine; partial). Mn(2+) is bound by residues E128 and D130. Ca(2+) is bound by residues D130, Y132, N138, and D141. Mn(2+)-binding residues include D141 and H146.

It belongs to the leguminous lectin family.

Functionally, di-N-acetylchitobiose specific lectin. The polypeptide is Lectin 1 (Laburnum alpinum (Scotch laburnum)).